Here is a 712-residue protein sequence, read N- to C-terminus: Polyribonucleotide nucleotidyltransferase (712 aa).

Positions 485 and 491 each coordinate Mg(2+). The KH domain occupies 552–615 (PRIHTIKINP…EAIRRIEAIT (64 aa)). The region spanning 621-689 (NRIYEGKVVR…RQGRVRLSIK (69 aa)) is the S1 motif domain.

The protein belongs to the polyribonucleotide nucleotidyltransferase family. In terms of assembly, component of the RNA degradosome, which is a multiprotein complex involved in RNA processing and mRNA degradation. Mg(2+) is required as a cofactor.

The protein localises to the cytoplasm. The catalysed reaction is RNA(n+1) + phosphate = RNA(n) + a ribonucleoside 5'-diphosphate. In terms of biological role, involved in mRNA degradation. Catalyzes the phosphorolysis of single-stranded polyribonucleotides processively in the 3'- to 5'-direction. The polypeptide is Polyribonucleotide nucleotidyltransferase (Aeromonas hydrophila subsp. hydrophila (strain ATCC 7966 / DSM 30187 / BCRC 13018 / CCUG 14551 / JCM 1027 / KCTC 2358 / NCIMB 9240 / NCTC 8049)).